The following is a 238-amino-acid chain: Endothelin-3 (238 aa).

An N-terminal signal peptide occupies residues 1-16 (MEPGLWLLFGLTVTSA). Residues 17–94 (AGFVPCSQSG…AEGAPEHHRS (78 aa)) constitute a propeptide that is removed on maturation. Residues 24-89 (QSGDAGRRGV…GQEQAAEGAP (66 aa)) are disordered. 2 disulfide bridges follow: C97-C111 and C99-C107. The propeptide occupies 118 to 238 (INTPEQTVPY…PRCLFQEGAP (121 aa)). The interval 159–173 (CACVGRYDKACLHFC) is endothelin-like. Residues 183–219 (SRTAEKTDKEEEGKVEVKDQQSKQALDLHHPKLMPGS) form a disordered region. Basic and acidic residues predominate over residues 185-212 (TAEKTDKEEEGKVEVKDQQSKQALDLHH).

It belongs to the endothelin/sarafotoxin family. In terms of tissue distribution, expressed in trophoblasts and placental stem villi vessels, but not in cultured placental smooth muscle cells.

It localises to the secreted. Endothelins are endothelium-derived vasoconstrictor peptides. This Homo sapiens (Human) protein is Endothelin-3 (EDN3).